The sequence spans 166 residues: Transcription antitermination protein NusB (166 aa).

Positions 1–18 (MISDESDRFNPRDPKPAD) are enriched in basic and acidic residues. The disordered stretch occupies residues 1 to 30 (MISDESDRFNPRDPKPADAGKPSKSAKRRE).

The protein belongs to the NusB family.

In terms of biological role, involved in transcription antitermination. Required for transcription of ribosomal RNA (rRNA) genes. Binds specifically to the boxA antiterminator sequence of the ribosomal RNA (rrn) operons. The polypeptide is Transcription antitermination protein NusB (Pseudomonas fluorescens (strain Pf0-1)).